The chain runs to 166 residues: Protein UL5 (166 aa).

In terms of assembly, interacts with host IQGAP1.

It is found in the host cytoplasm. Functionally, may play a role in rearrangement of cellular cytoskeleton towards an efficient viral assembly and spreading. The polypeptide is Protein UL5 (UL5) (Human cytomegalovirus (strain Merlin) (HHV-5)).